A 654-amino-acid polypeptide reads, in one-letter code: Mitochondrial-processing peptidase subunit alpha-1 (654 aa).

The tract at residues Ser-73–Asn-94 is disordered. Residues His-381 to Glu-446 adopt a coiled-coil conformation.

Belongs to the peptidase M16 family. As to quaternary structure, heterodimer of alpha and beta subunits, forming the mitochondrial processing protease (MPP) in which subunit alpha is involved in substrate recognition and binding and subunit beta is the catalytic subunit.

It is found in the mitochondrion matrix. Substrate recognition and binding subunit of the essential mitochondrial processing protease (MPP), which cleaves the mitochondrial sequence off newly imported precursors proteins. This Dictyostelium discoideum (Social amoeba) protein is Mitochondrial-processing peptidase subunit alpha-1 (mppA1).